The primary structure comprises 370 residues: N-acetyltaurine hydrolase (370 aa).

A divalent metal cation contacts are provided by His-26, His-28, Glu-189, His-221, His-250, and Asp-318.

The protein belongs to the metallo-dependent hydrolases superfamily. Phosphotriesterase family. Requires a divalent metal cation as cofactor.

Its subcellular location is the cytoplasm. The protein localises to the cytosol. The enzyme catalyses N-acetyltaurine + H2O = taurine + acetate. N-acetyltaurine hydrolase catalyzes the hydrolysis of N-acetyltaurine into taurine and acetate. This Dictyostelium discoideum (Social amoeba) protein is N-acetyltaurine hydrolase (pter).